The following is a 364-amino-acid chain: Heavy metal-associated isoprenylated plant protein 35 (364 aa).

Residues 1–12 (MATDEMKSETKK) are compositionally biased toward basic and acidic residues. The interval 1–33 (MATDEMKSETKKTEHKQKQSTQIKQDLPPPTIP) is disordered. One can recognise an HMA domain in the interval 39–102 (YKSCTLKVSI…KLNKAGKNAE (64 aa)). Positions 50 and 53 each coordinate a metal cation. Residues 101–265 (AEQLPEIPDP…PPTATDYDRP (165 aa)) form a disordered region. Residues 111 to 122 (VDNKPKPVDPKE) are compositionally biased toward basic and acidic residues. A compositionally biased stretch (polar residues) spans 134-144 (QITNEATSSGI). Basic and acidic residues-rich tracts occupy residues 154–169 (ECDKPESEKPVDEKCL) and 180–198 (VKEEKKDVLKEKDSGKEES). The segment covering 237–253 (SLATTNNPTDGPARTQS) has biased composition (polar residues). C361 is modified (cysteine methyl ester). C361 carries S-farnesyl cysteine lipidation. The propeptide at 362-364 (AIM) is removed in mature form.

Belongs to the HIPP family.

In terms of biological role, heavy-metal-binding protein. The sequence is that of Heavy metal-associated isoprenylated plant protein 35 from Arabidopsis thaliana (Mouse-ear cress).